A 192-amino-acid polypeptide reads, in one-letter code: Large ribosomal subunit protein uL6 (192 aa).

It belongs to the universal ribosomal protein uL6 family. Part of the 50S ribosomal subunit.

Its function is as follows. This protein binds to the 23S rRNA, and is important in its secondary structure. It is located near the subunit interface in the base of the L7/L12 stalk, and near the tRNA binding site of the peptidyltransferase center. This is Large ribosomal subunit protein uL6 from Nanoarchaeum equitans (strain Kin4-M).